We begin with the raw amino-acid sequence, 597 residues long: DNA ligase (597 aa).

E262 provides a ligand contact to ATP. The active-site N6-AMP-lysine intermediate is the K264. ATP contacts are provided by R269, R284, E314, F354, R431, and K437.

This sequence belongs to the ATP-dependent DNA ligase family. Mg(2+) serves as cofactor. Mn(2+) is required as a cofactor.

The catalysed reaction is ATP + (deoxyribonucleotide)n-3'-hydroxyl + 5'-phospho-(deoxyribonucleotide)m = (deoxyribonucleotide)n+m + AMP + diphosphate.. The enzyme catalyses ADP + (deoxyribonucleotide)n-3'-hydroxyl + 5'-phospho-(deoxyribonucleotide)m = (deoxyribonucleotide)n+m + AMP + phosphate.. It carries out the reaction GTP + (deoxyribonucleotide)n-3'-hydroxyl + 5'-phospho-(deoxyribonucleotide)m = (deoxyribonucleotide)n+m + GMP + diphosphate.. Its activity is regulated as follows. Inhibited by Ca(2+) and Zn(2+). Its function is as follows. DNA ligase that seals nicks in double-stranded DNA during DNA replication, DNA recombination and DNA repair. Can use both ATP and ADP. The sequence is that of DNA ligase from Staphylothermus marinus (strain ATCC 43588 / DSM 3639 / JCM 9404 / F1).